The primary structure comprises 344 residues: Uroporphyrinogen decarboxylase (344 aa).

Residues 24–28 (RQAGR), phenylalanine 43, aspartate 74, tyrosine 151, serine 206, and histidine 323 contribute to the substrate site.

Belongs to the uroporphyrinogen decarboxylase family. As to quaternary structure, homodimer.

Its subcellular location is the cytoplasm. The catalysed reaction is uroporphyrinogen III + 4 H(+) = coproporphyrinogen III + 4 CO2. Its pathway is porphyrin-containing compound metabolism; protoporphyrin-IX biosynthesis; coproporphyrinogen-III from 5-aminolevulinate: step 4/4. Functionally, catalyzes the decarboxylation of four acetate groups of uroporphyrinogen-III to yield coproporphyrinogen-III. This Rhodobacter capsulatus (Rhodopseudomonas capsulata) protein is Uroporphyrinogen decarboxylase.